The following is a 210-amino-acid chain: MNLTVVNHPLVQHKLGLLREGDISTNKFRTITHELARLLAYEATRDFELEPITIDGWCGKIEVQQIKGKKVTVVPILRAGLGMLDGVLDLVPSAKISVVGLYRNEETLEPVPYFDKFVDSLDERIALIIDPMLATGGSMVATIDLLKRKGCKSIRAIVMVAAPEGIKVVNEAHPDVPVFTASLDSHLNEQGYIIPGLGDAGDKIFGTKHS.

5-phospho-alpha-D-ribose 1-diphosphate is bound by residues R78, R103, and 130 to 138 (DPMLATGGS). Uracil contacts are provided by residues I193 and 198-200 (GDA). D199 contributes to the 5-phospho-alpha-D-ribose 1-diphosphate binding site.

The protein belongs to the UPRTase family. Mg(2+) serves as cofactor.

It catalyses the reaction UMP + diphosphate = 5-phospho-alpha-D-ribose 1-diphosphate + uracil. It participates in pyrimidine metabolism; UMP biosynthesis via salvage pathway; UMP from uracil: step 1/1. Allosterically activated by GTP. Catalyzes the conversion of uracil and 5-phospho-alpha-D-ribose 1-diphosphate (PRPP) to UMP and diphosphate. The sequence is that of Uracil phosphoribosyltransferase from Laribacter hongkongensis (strain HLHK9).